The sequence spans 388 residues: Oligogalacturonide lyase (388 aa).

It localises to the periplasm. The catalysed reaction is 4-(4-deoxy-alpha-D-galact-4-enuronosyl)-D-galacturonate = 2 5-dehydro-4-deoxy-D-glucuronate. Its pathway is glycan metabolism; pectin degradation; 2-dehydro-3-deoxy-D-gluconate from pectin: step 3/5. Involved in degradation of pectin, which causes soft-rod disease in plants. The protein is Oligogalacturonide lyase (ogl) of Pectobacterium atrosepticum (strain SCRI 1043 / ATCC BAA-672) (Erwinia carotovora subsp. atroseptica).